The following is a 162-amino-acid chain: Large ribosomal subunit protein uL15 (162 aa).

Residues 1–13 (MNLNELRDNEGSR) are compositionally biased toward basic and acidic residues. Positions 1–39 (MNLNELRDNEGSRYRKKRLGRGIGSGKGKTSGRGVKGQK) are disordered. Residues 21–35 (RGIGSGKGKTSGRGV) are compositionally biased toward gly residues.

It belongs to the universal ribosomal protein uL15 family. In terms of assembly, part of the 50S ribosomal subunit.

Binds to the 23S rRNA. This is Large ribosomal subunit protein uL15 from Gluconobacter oxydans (strain 621H) (Gluconobacter suboxydans).